We begin with the raw amino-acid sequence, 209 residues long: FMN-dependent NADH:quinone oxidoreductase (209 aa).

FMN is bound by residues S9 and S15–S17.

It belongs to the azoreductase type 1 family. In terms of assembly, homodimer. It depends on FMN as a cofactor.

It catalyses the reaction 2 a quinone + NADH + H(+) = 2 a 1,4-benzosemiquinone + NAD(+). It carries out the reaction N,N-dimethyl-1,4-phenylenediamine + anthranilate + 2 NAD(+) = 2-(4-dimethylaminophenyl)diazenylbenzoate + 2 NADH + 2 H(+). Quinone reductase that provides resistance to thiol-specific stress caused by electrophilic quinones. In terms of biological role, also exhibits azoreductase activity. Catalyzes the reductive cleavage of the azo bond in aromatic azo compounds to the corresponding amines. This is FMN-dependent NADH:quinone oxidoreductase from Bordetella bronchiseptica (strain ATCC BAA-588 / NCTC 13252 / RB50) (Alcaligenes bronchisepticus).